A 615-amino-acid chain; its full sequence is MATVIHSPRDPNTLSNYNNWVSTHITATFDILFEQKKLVGNVVHKLKSITDARSTEIILDTNHVDIGDVKVDGQASHWELLPPLEPYGAALKINLDQGVGLNEMVEVEISVKTTEKCTALQWLTPAQTSNRKHPYMFSQCQAIHARSIFPCQDTPDVKSTIDFNITSPLPVVASGLPVRGIIEKAQPGSKTLYQFHQKLPIPSYLFALASGDISEAAIGPRSVVATSPDKLSECQWELKADTENFIHAIEKIVYPYAWGEYNVLILPPSFPYGGMENPIFTFATPSIISKDRENVDVIAHELAHSWSGNLVTNASWEHFWLNEGWTTYLERRVSLHGEAYRHFSAIIGWKSLADSVEHFGHDHPFTKLVTDLKGKDPDDAFSSIPYEKGFNFLFHLENLLAKDKFDRFIPHYFTKFKGKSLDSYEFKATMLEFFQHDLEASNLLKNVDWDAWFYAPGLPPKPQFDTSLVDVVYELSSKWKSLPDSSFQPRTSDIEGLTANQIVVLLEQILLFERPLTPELSRVLGEVYSLAKSENIEVSNLYFQVGLRAGDDTVYKPTAELLGKIGRMKFVRPLYRNLQKVNRPLAIETFEKNKDFYHPICRAMVEKDLFGKREE.

A peptide-binding positions include 139 to 141 (QCQ) and 271 to 276 (PYGGME). Histidine 300 contacts Zn(2+). Catalysis depends on glutamate 301, which acts as the Proton acceptor. Zn(2+) contacts are provided by histidine 304 and glutamate 323. The active-site Proton donor is the tyrosine 386.

It belongs to the peptidase M1 family. It depends on Zn(2+) as a cofactor.

The protein resides in the cytoplasm. The protein localises to the nucleus. It carries out the reaction an epoxide + H2O = an ethanediol. Its function is as follows. Aminopeptidase that preferentially cleaves di- and tripeptides. Also has low epoxide hydrolase activity (in vitro). Can hydrolyze the epoxide leukotriene LTA(4) but it forms preferentially 5,6-dihydroxy-7,9,11,14-eicosatetraenoic acid rather than the cytokine leukotriene B(4) as the product compared to the homologous mammalian enzyme (in vitro). In Aspergillus oryzae (strain ATCC 42149 / RIB 40) (Yellow koji mold), this protein is Leucine aminopeptidase 2.